The primary structure comprises 90 residues: Small ribosomal subunit protein bS20 (90 aa).

Residues 1-25 form a disordered region; sequence MANSPSAKKRAKQAEKRRSHNASLR. Residues 7–20 are compositionally biased toward basic residues; the sequence is AKKRAKQAEKRRSH.

The protein belongs to the bacterial ribosomal protein bS20 family.

In terms of biological role, binds directly to 16S ribosomal RNA. This chain is Small ribosomal subunit protein bS20, found in Pseudomonas fluorescens (strain Pf0-1).